The sequence spans 338 residues: UDP-3-O-acylglucosamine N-acyltransferase (338 aa).

Residue His-251 is the Proton acceptor of the active site.

This sequence belongs to the transferase hexapeptide repeat family. LpxD subfamily. Homotrimer.

It catalyses the reaction a UDP-3-O-[(3R)-3-hydroxyacyl]-alpha-D-glucosamine + a (3R)-hydroxyacyl-[ACP] = a UDP-2-N,3-O-bis[(3R)-3-hydroxyacyl]-alpha-D-glucosamine + holo-[ACP] + H(+). It functions in the pathway bacterial outer membrane biogenesis; LPS lipid A biosynthesis. Catalyzes the N-acylation of UDP-3-O-acylglucosamine using 3-hydroxyacyl-ACP as the acyl donor. Is involved in the biosynthesis of lipid A, a phosphorylated glycolipid that anchors the lipopolysaccharide to the outer membrane of the cell. This chain is UDP-3-O-acylglucosamine N-acyltransferase, found in Psychrobacter arcticus (strain DSM 17307 / VKM B-2377 / 273-4).